Reading from the N-terminus, the 452-residue chain is Retinoid-inducible serine carboxypeptidase (452 aa).

Positions 1-28 (MELSRRICLVRLWLLLLSFLLGFSAGSA) are cleaved as a signal peptide. 3 N-linked (GlcNAc...) asparagine glycosylation sites follow: Asn-64, Asn-102, and Asn-126. Residue Ser-167 is part of the active site. Residues Asn-192 and Asn-362 are each glycosylated (N-linked (GlcNAc...) asparagine). Catalysis depends on residues Asp-371 and His-431.

It belongs to the peptidase S10 family. In terms of tissue distribution, highly expressed in aorta, bladder, and kidney with much lower levels in all other tissues analyzed. Expression in kidney is restricted to proximal convoluted tubules.

Its subcellular location is the secreted. Functionally, may be involved in vascular wall and kidney homeostasis. The sequence is that of Retinoid-inducible serine carboxypeptidase (Scpep1) from Rattus norvegicus (Rat).